A 195-amino-acid chain; its full sequence is CASP-like protein 1B1 (195 aa).

Residues methionine 1 to leucine 25 are Cytoplasmic-facing. A helical transmembrane segment spans residues isoleucine 26 to isoleucine 46. The Extracellular segment spans residues methionine 47–proline 78. The helical transmembrane segment at alanine 79 to valine 99 threads the bilayer. Over threonine 100–histidine 114 the chain is Cytoplasmic. A helical transmembrane segment spans residues leucine 115–alanine 135. At glutamine 136–histidine 160 the chain is on the extracellular side. A helical transmembrane segment spans residues glycine 161–leucine 181. Over serine 182 to glutamine 195 the chain is Cytoplasmic.

The protein belongs to the Casparian strip membrane proteins (CASP) family. Homodimer and heterodimers.

It is found in the cell membrane. The chain is CASP-like protein 1B1 from Oryza sativa subsp. indica (Rice).